Here is a 496-residue protein sequence, read N- to C-terminus: Autophagy-related protein 21 (496 aa).

The disordered stretch occupies residues 41–86; that stretch reads SKKKTSNNNGSASNSESRNNEESILITNGSRDRTDAEEEEDNEDNA. Residues 46 to 57 are compositionally biased toward low complexity; sequence SNNNGSASNSES. Residues 75–84 are compositionally biased toward acidic residues; sequence DAEEEEDNED. Threonine 213 carries the phosphothreonine modification. At serine 237 the chain carries Phosphoserine. 3 WD repeats span residues 294–334, 346–385, and 448–488; these read VHKG…DYMS, TRLC…NSLP, and VNES…GECV. The L/FRRG motif motif lies at 342–346; sequence FRRGT.

Belongs to the WD repeat PROPPIN family.

It localises to the cytoplasm. Its subcellular location is the vacuole. Its function is as follows. Required for cytoplasm to vacuole transport (Cvt) vesicles formation and mitophagy. Involved in binding of phosphatidylethanolamine to ATG8 and in recruitment of ATG8 and ATG5 to the pre-autophagosomal structure. Protects ATG8 from ARG4-mediated cleavage. Essential for maturation of proaminopeptidase I. The chain is Autophagy-related protein 21 (ATG21) from Saccharomyces cerevisiae (strain ATCC 204508 / S288c) (Baker's yeast).